Reading from the N-terminus, the 301-residue chain is Tyrosine recombinase XerC (301 aa).

Positions 1-85 (MELISLFKQY…ALRSFYRFLV (85 aa)) constitute a Core-binding (CB) domain. Residues 106–292 (KLPHFFYEKE…TKEKLQESYR (187 aa)) form the Tyr recombinase domain. Catalysis depends on residues Arg147, Lys171, His244, Arg247, and His270. The active-site O-(3'-phospho-DNA)-tyrosine intermediate is the Tyr279.

The protein belongs to the 'phage' integrase family. XerC subfamily. Forms a cyclic heterotetrameric complex composed of two molecules of XerC and two molecules of XerD.

It is found in the cytoplasm. In terms of biological role, site-specific tyrosine recombinase, which acts by catalyzing the cutting and rejoining of the recombining DNA molecules. The XerC-XerD complex is essential to convert dimers of the bacterial chromosome into monomers to permit their segregation at cell division. It also contributes to the segregational stability of plasmids. The chain is Tyrosine recombinase XerC from Pediococcus pentosaceus (strain ATCC 25745 / CCUG 21536 / LMG 10740 / 183-1w).